We begin with the raw amino-acid sequence, 335 residues long: Biotin synthase (335 aa).

Residues 51–281 (YRVQLASLLS…RSRVRLSAGR (231 aa)) form the Radical SAM core domain. [4Fe-4S] cluster contacts are provided by cysteine 66, cysteine 70, and cysteine 73. 4 residues coordinate [2Fe-2S] cluster: cysteine 112, cysteine 144, cysteine 204, and arginine 276.

It belongs to the radical SAM superfamily. Biotin synthase family. As to quaternary structure, homodimer. [4Fe-4S] cluster is required as a cofactor. Requires [2Fe-2S] cluster as cofactor.

The enzyme catalyses (4R,5S)-dethiobiotin + (sulfur carrier)-SH + 2 reduced [2Fe-2S]-[ferredoxin] + 2 S-adenosyl-L-methionine = (sulfur carrier)-H + biotin + 2 5'-deoxyadenosine + 2 L-methionine + 2 oxidized [2Fe-2S]-[ferredoxin]. It functions in the pathway cofactor biosynthesis; biotin biosynthesis; biotin from 7,8-diaminononanoate: step 2/2. Its function is as follows. Catalyzes the conversion of dethiobiotin (DTB) to biotin by the insertion of a sulfur atom into dethiobiotin via a radical-based mechanism. The protein is Biotin synthase of Prochlorococcus marinus (strain MIT 9303).